Consider the following 531-residue polypeptide: Ultra-long-chain fatty acid omega-hydroxylase (531 aa).

The Lumenal portion of the chain corresponds to 1–22; sequence MLPITDRLLHLLGLEKTAFRIY. The chain crosses the membrane as a helical span at residues 23–43; that stretch reads AVSTLLLFLLFFLFRLLLRFL. Topologically, residues 44–531 are cytoplasmic; the sequence is RLCRSFYITC…LKVEPLPPRA (488 aa). Heme-binding residues include glutamate 335 and cysteine 475.

This sequence belongs to the cytochrome P450 family. Requires heme as cofactor.

The protein localises to the endoplasmic reticulum membrane. It localises to the microsome membrane. It carries out the reaction triacontanoate + reduced [NADPH--hemoprotein reductase] + O2 = omega-hydroxy-triacontanoate + oxidized [NADPH--hemoprotein reductase] + H2O + H(+). It catalyses the reaction an omega-methyl-ultra-long-chain fatty acid + reduced [NADPH--hemoprotein reductase] + O2 = an omega-hydroxy-ultra-long-chain fatty acid + oxidized [NADPH--hemoprotein reductase] + H2O + H(+). In terms of biological role, a cytochrome P450 monooxygenase involved in epidermal ceramide biosynthesis. Hydroxylates the terminal carbon (omega-hydroxylation) of ultra-long-chain fatty acyls (C28-C36) prior to ceramide synthesis. Contributes to the synthesis of three classes of omega-hydroxy-ultra-long chain fatty acylceramides having sphingosine, 6-hydroxysphingosine and phytosphingosine bases, all major lipid components that underlie the permeability barrier of the stratum corneum. Mechanistically, uses molecular oxygen inserting one oxygen atom into a substrate, and reducing the second into a water molecule, with two electrons provided by NADPH via cytochrome P450 reductase (CPR; NADPH-ferrihemoprotein reductase). The polypeptide is Ultra-long-chain fatty acid omega-hydroxylase (Homo sapiens (Human)).